Consider the following 208-residue polypeptide: Holliday junction branch migration complex subunit RuvA (208 aa).

Residues 1–67 form a domain I region; it reads MIGWLHGTIG…EDGQQLYGFE (67 aa). A domain II region spans residues 68 to 146; it reads TKADRNLFRL…ERWQQQGGST (79 aa). Positions 147 to 157 are flexible linker; it reads PLRLVEPVAES. Residues 157-208 form a domain III region; sequence SRELRATLEALGYGPEEVSAAVAQAGSQGLDPEQPMEEWLRHCLAWLSRQAG.

It belongs to the RuvA family. Homotetramer. Forms an RuvA(8)-RuvB(12)-Holliday junction (HJ) complex. HJ DNA is sandwiched between 2 RuvA tetramers; dsDNA enters through RuvA and exits via RuvB. An RuvB hexamer assembles on each DNA strand where it exits the tetramer. Each RuvB hexamer is contacted by two RuvA subunits (via domain III) on 2 adjacent RuvB subunits; this complex drives branch migration. In the full resolvosome a probable DNA-RuvA(4)-RuvB(12)-RuvC(2) complex forms which resolves the HJ.

The protein resides in the cytoplasm. Functionally, the RuvA-RuvB-RuvC complex processes Holliday junction (HJ) DNA during genetic recombination and DNA repair, while the RuvA-RuvB complex plays an important role in the rescue of blocked DNA replication forks via replication fork reversal (RFR). RuvA specifically binds to HJ cruciform DNA, conferring on it an open structure. The RuvB hexamer acts as an ATP-dependent pump, pulling dsDNA into and through the RuvAB complex. HJ branch migration allows RuvC to scan DNA until it finds its consensus sequence, where it cleaves and resolves the cruciform DNA. The sequence is that of Holliday junction branch migration complex subunit RuvA from Synechococcus sp. (strain RCC307).